Consider the following 149-residue polypeptide: Low molecular weight protein-tyrosine-phosphatase Wzb (149 aa).

Cys-9 acts as the Nucleophile in catalysis. Arg-15 is an active-site residue. The Proton donor role is filled by Asp-115.

This sequence belongs to the low molecular weight phosphotyrosine protein phosphatase family.

The enzyme catalyses O-phospho-L-tyrosyl-[protein] + H2O = L-tyrosyl-[protein] + phosphate. It participates in glycan metabolism; exopolysaccharide biosynthesis. In terms of biological role, dephosphorylates Wzc. Required for the extracellular polysaccharide colanic acid synthesis. Probably involved in the export of colanic acid from the cell to medium. Involved in protection of cells against contact-dependent growth inhibition (CDI). This is Low molecular weight protein-tyrosine-phosphatase Wzb (wzb) from Salmonella typhi.